The following is a 185-amino-acid chain: Ribosome-recycling factor (185 aa).

This sequence belongs to the RRF family.

The protein localises to the cytoplasm. Responsible for the release of ribosomes from messenger RNA at the termination of protein biosynthesis. May increase the efficiency of translation by recycling ribosomes from one round of translation to another. This Nocardia farcinica (strain IFM 10152) protein is Ribosome-recycling factor.